The chain runs to 346 residues: UPF0053 protein sll1254 (346 aa).

The next 4 membrane-spanning stretches (helical) occupy residues 1–21 (MLEI…CSCA), 58–78 (IGTI…TIGA), 87–107 (AWMG…GEII), and 121–141 (LLIA…VWLI). In terms of domain architecture, CNNM transmembrane spans 1–179 (MLEIVAAIFI…YKEGVIEGDE (179 aa)). CBS domains follow at residues 198–259 (MTPR…GYKT) and 263–320 (LARP…IVDE).

The protein belongs to the UPF0053 family.

Its subcellular location is the cell membrane. The chain is UPF0053 protein sll1254 from Synechocystis sp. (strain ATCC 27184 / PCC 6803 / Kazusa).